We begin with the raw amino-acid sequence, 649 residues long: Endoplasmic reticulum chaperone BiP (649 aa).

The signal sequence occupies residues 1 to 20 (MGLSTYVGTFLLCILTLSHC). Residues 36–39 (GTTY), Lys-96, 226–228 (GGT), 292–299 (EKAKRTLS), and 363–366 (GSTR) each bind ATP. A nucleotide-binding (NBD) region spans residues 125-279 (KPYMKVQVGS…KKKEGKDITK (155 aa)). A substrate-binding (SBD) region spans residues 399–499 (VQAGVISGVE…PRGLPQIEVT (101 aa)). Positions 646–649 (KEEL) match the Prevents secretion from ER motif.

The protein belongs to the heat shock protein 70 family.

Its subcellular location is the endoplasmic reticulum lumen. The catalysed reaction is ATP + H2O = ADP + phosphate + H(+). Its activity is regulated as follows. The chaperone activity is regulated by ATP-induced allosteric coupling of the nucleotide-binding (NBD) and substrate-binding (SBD) domains. In the ADP-bound and nucleotide-free (apo) states, the two domains have little interaction. In contrast, in the ATP-bound state the two domains are tightly coupled, which results in drastically accelerated kinetics in both binding and release of polypeptide substrates. J domain-containing co-chaperones stimulate the ATPase activity and are required for efficient substrate recognition. Its function is as follows. Endoplasmic reticulum chaperone that plays a key role in protein folding and quality control in the endoplasmic reticulum lumen. Involved in the correct folding of proteins and degradation of misfolded proteins. Acts as a key repressor of the unfolded protein response (UPR). The sequence is that of Endoplasmic reticulum chaperone BiP from Echinococcus multilocularis (Fox tapeworm).